The sequence spans 1129 residues: Serine/threonine-protein kinase LATS1 (1129 aa).

The segment covering 1–11 has biased composition (basic and acidic residues); that stretch reads MKRGEKPEGYR. The segment at 1 to 71 is disordered; sequence MKRGEKPEGY…PRQVRNPPKF (71 aa). Positions 19 to 30 are enriched in polar residues; that stretch reads PASNYPGSSRQM. Over residues 46–64 the composition is skewed to basic and acidic residues; sequence DASKAEHNLNKMSTEDPRQ. One can recognise a UBA domain in the interval 100 to 141; that stretch reads EVNPQMFQDLQAAGFDEDMVIQALQKTNNRSIEAAVEFISKM. Disordered regions lie at residues 148 to 216 and 228 to 276; these read REQM…RPLS and PSNG…QTKR. Residues 235–268 show a composition bias toward pro residues; the sequence is NPPPPPQVRSVTPPPPPRGQTPPPRGTTPPPPSW. Phosphothreonine is present on Thr-246. Ser-278 carries the post-translational modification Phosphoserine. Disordered regions lie at residues 292–317, 363–407, 432–492, and 513–630; these read PPGA…SQAQ, PTGS…VPQS, WPQS…TPAP, and PTHP…ESRI. A compositionally biased stretch (pro residues) spans 300–312; the sequence is YPPPPLTTSPMNP. The short motif at 372 to 375 is the PPxY motif 1 element; the sequence is PPPY. Residues 380–392 show a composition bias toward polar residues; that stretch reads ANGQSPSALQTGA. Over residues 433-445 the composition is skewed to low complexity; the sequence is PQSSSAPAQSSPS. Residues 453–481 show a composition bias toward polar residues; it reads WQPNIPVRSNSFNNPLGSRASHSANSQPS. Position 463 is a phosphoserine; by NUAK1 and NUAK2 (Ser-463). Composition is skewed to low complexity over residues 482–492 and 520–530; these read ATTVTAITPAP and PQPVQTVQPTP. Residues 525–654 are interaction with YAP1; sequence TVQPTPFSEG…HVENVLKSHQ (130 aa). Positions 555–558 match the PPxY motif 2 motif; sequence PPPY. Residues 578 to 608 are compositionally biased toward basic and acidic residues; it reads PCKDEQPSLPKEDDSEKSADSGDSGDKEKKQ. At Ser-612 the chain carries Phosphoserine. Over residues 620 to 629 the composition is skewed to basic and acidic residues; that stretch reads KKDEERRESR. Ser-673 carries the phosphoserine modification. In terms of domain architecture, Protein kinase spans 704 to 1009; sequence FVKIKTLGIG…ADEIKAHPFF (306 aa). Residues 710 to 718 and Lys-733 each bind ATP; that span reads LGIGAFGEV. The active-site Proton acceptor is Asp-827. Residue Ser-908 is modified to Phosphoserine; by STK3/MST2. An AGC-kinase C-terminal domain is found at 1010 to 1089; sequence KTIDFSSDLR…RRFFDDNGYP (80 aa). A Phosphothreonine; by STK3/MST2 modification is found at Thr-1078. The disordered stretch occupies residues 1104 to 1129; that stretch reads QGSEQQSDEDDQHTSSDGNNRDLVYV.

It belongs to the protein kinase superfamily. AGC Ser/Thr protein kinase family. As to quaternary structure, complexes with CDK1 in early mitosis. LATS1-associated CDK1 has no mitotic cyclin partner and no apparent kinase activity. Binds phosphorylated ZYX, locating this protein to the mitotic spindle and suggesting a role for actin regulatory proteins during mitosis. Binds to and colocalizes with LIMK1 at the actomyosin contractile ring during cytokinesis. Interacts (via PPxY motif 2) with YAP1 (via WW domains). Interacts with MOB1A and MOB1B. Interacts with LIMD1, WTIP and AJUBA. Interacts with ESR1, DCAF1 and DCAF13; probably recruits DCAF1 and DCAF13 to ESR1 to promote ESR1 ubiquitination and ubiquitin-mediated proteasomal degradation. Interacts with STK3/MST2; this interaction is inhibited in the presence of DLG5. Interacts with SCRIB in the presence of DLG5. Interacts with WWTR1/TAZ. Interacts with WWC1, WWC2 and WWC3 (via their WW domains). The cofactor is Mg(2+). In terms of processing, autophosphorylated and phosphorylated during M-phase of the cell cycle. Phosphorylated by STK3/MST2 at Ser-908 and Thr-1078, which results in its activation. Phosphorylated by MAP4Ks; in parallel to STK3/MST2 and resulting to its activation. Phosphorylation at Ser-463 by NUAK1 and NUAK2 leads to decreased protein level and is required to regulate cellular senescence and cellular ploidy.

The protein resides in the cytoplasm. The protein localises to the cytoskeleton. Its subcellular location is the microtubule organizing center. It localises to the centrosome. It is found in the spindle. The protein resides in the midbody. The protein localises to the spindle pole body. The enzyme catalyses L-seryl-[protein] + ATP = O-phospho-L-seryl-[protein] + ADP + H(+). The catalysed reaction is L-threonyl-[protein] + ATP = O-phospho-L-threonyl-[protein] + ADP + H(+). In terms of biological role, negative regulator of YAP1 in the Hippo signaling pathway that plays a pivotal role in organ size control and tumor suppression by restricting proliferation and promoting apoptosis. The core of this pathway is composed of a kinase cascade wherein STK3/MST2 and STK4/MST1, in complex with its regulatory protein SAV1, phosphorylates and activates LATS1/2 in complex with its regulatory protein MOB1, which in turn phosphorylates and inactivates YAP1 oncoprotein and WWTR1/TAZ. Phosphorylation of YAP1 by LATS1 inhibits its translocation into the nucleus to regulate cellular genes important for cell proliferation, cell death, and cell migration. Acts as a tumor suppressor which plays a critical role in maintenance of ploidy through its actions in both mitotic progression and the G1 tetraploidy checkpoint. Negatively regulates G2/M transition by down-regulating CDK1 kinase activity. Involved in the control of p53 expression. Affects cytokinesis by regulating actin polymerization through negative modulation of LIMK1. May also play a role in endocrine function. Plays a role in mammary gland epithelial cell differentiation, both through the Hippo signaling pathway and the intracellular estrogen receptor signaling pathway by promoting the degradation of ESR1. Acts as an activator of the NLRP3 inflammasome by mediating phosphorylation of 'Ser-265' of NLRP3 following NLRP3 palmitoylation, promoting NLRP3 activation by NEK7. This chain is Serine/threonine-protein kinase LATS1, found in Mus musculus (Mouse).